The chain runs to 75 residues: Endogenous retrovirus group K member 10 Np9 protein (75 aa).

The disordered stretch occupies residues 21-43 (PTAPKRQRPSRTGHDDDGGFVEK). Positions 32 to 43 (TGHDDDGGFVEK) are enriched in basic and acidic residues.

The protein resides in the nucleus. Its function is as follows. May possess a function in tumorigenesis. The protein is Endogenous retrovirus group K member 10 Np9 protein (ERVK-10) of Homo sapiens (Human).